Consider the following 136-residue polypeptide: Calcitonin (136 aa).

The first 25 residues, 1 to 25, serve as a signal peptide directing secretion; it reads MGFLKFSPFLVVSILLLYQACGLQA. Residues 26–82 constitute a propeptide that is removed on maturation; that stretch reads VPLRSTLESSPGMATLSEEEARLLAALVQNYMQMKVRELEQEEEQEAEGSSLDSPRS. Position 42 is a phosphoserine (Ser-42). The tract at residues 64-84 is disordered; that stretch reads LEQEEEQEAEGSSLDSPRSKR. The cysteines at positions 85 and 91 are disulfide-linked. Asn-87 is a glycosylation site (N-linked (GlcNAc...) asparagine). Residues 114–136 are disordered; the sequence is GAPGKKRDMAKDLETNHHPYFGN. At Pro-116 the chain carries Proline amide. Residues 118 to 130 are compositionally biased toward basic and acidic residues; the sequence is KKRDMAKDLETNH. A propeptide spanning residues 121-136 is cleaved from the precursor; the sequence is DMAKDLETNHHPYFGN.

Belongs to the calcitonin family.

Its subcellular location is the secreted. Functionally, calcitonin is a peptide hormone that causes a rapid but short-lived drop in the level of calcium and phosphate in blood by promoting the incorporation of those ions in the bones. Calcitonin function is mediated by the calcitonin receptor/CALCR and the CALCR-RAMP2 (AMYR2) receptor complex. This is Calcitonin from Rattus norvegicus (Rat).